The chain runs to 444 residues: Orexin receptor type 2 (444 aa).

Positions 1 to 10 (MSGTKLEDSP) are enriched in basic and acidic residues. Residues 1 to 30 (MSGTKLEDSPPCRNWSSAPELNETQEPFLN) are disordered. Over 1-54 (MSGTKLEDSPPCRNWSSAPELNETQEPFLNPTDYDDEEFLRYLWREYLHPKEYE) the chain is Extracellular. N-linked (GlcNAc...) asparagine glycosylation is found at N14 and N22. The segment covering 14–27 (NWSSAPELNETQEP) has biased composition (polar residues). A required for response to orexin-A region spans residues 33–49 (DYDDEEFLRYLWREYLH). Residues 55 to 75 (WVLIAGYIIVFVVALVGNVLV) traverse the membrane as a helical segment. Over 76–88 (CVAVWKNHHMRTV) the chain is Cytoplasmic. Residues 89-110 (TNYFIVNLSLADVLVTITCLPA) form a helical membrane-spanning segment. At 111–127 (TLVVDITETWFFGQSLC) the chain is on the extracellular side. C127 and C210 are disulfide-bonded. Residues 128 to 150 (KVIPYLQTVSVSVSVLTLSCIAL) traverse the membrane as a helical segment. The Cytoplasmic segment spans residues 151-170 (DRWYAICHPLMFKSTAKRAR). The helical transmembrane segment at 171–191 (NSIVIIWIVSCIIMIPQAIVM) threads the bilayer. Topologically, residues 192-222 (ECSTMLPGLANKTTLFTVCDERWGGEIYPKM) are extracellular. The N-linked (GlcNAc...) asparagine glycan is linked to N202. The chain crosses the membrane as a helical span at residues 223–243 (YHICFFLVTYMAPLCLMVLAY). Topologically, residues 244 to 304 (LQIFRKLWCR…QIRARRKTAR (61 aa)) are cytoplasmic. Residues 305-326 (MLMVVLLVFAICYLPISILNVL) form a helical membrane-spanning segment. Topologically, residues 327–342 (KRVFGMFTHTEDRETV) are extracellular. Residues 343 to 366 (YAWFTFSHWLVYANSAANPIIYNF) form a helical membrane-spanning segment. The Cytoplasmic portion of the chain corresponds to 367 to 444 (LSGKFREEFK…ANGAGPLQNW (78 aa)).

The protein belongs to the G-protein coupled receptor 1 family.

The protein localises to the cell membrane. Nonselective, high-affinity receptor for both orexin-A and orexin-B neuropeptides. Triggers an increase in cytoplasmic Ca(2+) levels in response to orexin-A binding. The polypeptide is Orexin receptor type 2 (HCRTR2) (Canis lupus familiaris (Dog)).